We begin with the raw amino-acid sequence, 576 residues long: Laccase-1 (576 aa).

A signal peptide spans 1–19; it reads MARTTFLVSVSLFVSAVLA. 2 Plastocyanin-like domains span residues 21–145 and 157–304; these read TVEY…LVIY and VDDE…LVYE. Asparagine 41 is a glycosylation site (N-linked (GlcNAc...) asparagine). The Cu cation site is built by histidine 82, histidine 84, histidine 127, and histidine 129. Cysteine 103 and cysteine 562 are disulfide-bonded. N-linked (GlcNAc...) asparagine glycosylation is found at asparagine 182, asparagine 228, asparagine 294, and asparagine 368. The region spanning 376–576 is the Plastocyanin-like 3 domain; it reads DESKLVPLEY…NWLKSNPGQL (201 aa). Positions 471, 474, 476, 523, 524, 525, and 529 each coordinate Cu cation.

The protein belongs to the multicopper oxidase family. Homodimer. It depends on Cu cation as a cofactor. In mycelia, at a lower level than LCC4.

It is found in the secreted. It catalyses the reaction 4 hydroquinone + O2 = 4 benzosemiquinone + 2 H2O. Lignin degradation and detoxification of lignin-derived products. The sequence is that of Laccase-1 (LCC1) from Thanatephorus cucumeris (Black scurf of potato).